The chain runs to 469 residues: Glutamate--tRNA ligase (469 aa).

The short motif at 10–20 is the 'HIGH' region element; the sequence is PSPTGYLHVGG. Residues C99, C101, C126, and D128 each contribute to the Zn(2+) site. Residues 238–242 carry the 'KMSKS' region motif; that stretch reads RLSKR. K241 contacts ATP.

Belongs to the class-I aminoacyl-tRNA synthetase family. Glutamate--tRNA ligase type 1 subfamily. As to quaternary structure, monomer. The cofactor is Zn(2+).

Its subcellular location is the cytoplasm. The enzyme catalyses tRNA(Glu) + L-glutamate + ATP = L-glutamyl-tRNA(Glu) + AMP + diphosphate. In terms of biological role, catalyzes the attachment of glutamate to tRNA(Glu) in a two-step reaction: glutamate is first activated by ATP to form Glu-AMP and then transferred to the acceptor end of tRNA(Glu). The polypeptide is Glutamate--tRNA ligase (Pelobacter propionicus (strain DSM 2379 / NBRC 103807 / OttBd1)).